The sequence spans 85 residues: Small ribosomal subunit protein bS20 (85 aa).

The protein belongs to the bacterial ribosomal protein bS20 family.

Functionally, binds directly to 16S ribosomal RNA. The protein is Small ribosomal subunit protein bS20 of Borrelia garinii subsp. bavariensis (strain ATCC BAA-2496 / DSM 23469 / PBi) (Borreliella bavariensis).